A 349-amino-acid polypeptide reads, in one-letter code: sn-glycerol-3-phosphate import ATP-binding protein UgpC (349 aa).

An ABC transporter domain is found at 4-234; that stretch reads ISLRDVRKSY…PATTFVAGFI (231 aa). 36-43 is a binding site for ATP; the sequence is GPSGCGKS.

Belongs to the ABC transporter superfamily. sn-glycerol-3-phosphate importer (TC 3.A.1.1.3) family. In terms of assembly, the complex is composed of two ATP-binding proteins (UgpC), two transmembrane proteins (UgpA and UgpE) and a solute-binding protein (UgpB).

Its subcellular location is the cell inner membrane. The enzyme catalyses sn-glycerol 3-phosphate(out) + ATP + H2O = sn-glycerol 3-phosphate(in) + ADP + phosphate + H(+). Part of the ABC transporter complex UgpBAEC involved in sn-glycerol-3-phosphate (G3P) import. Responsible for energy coupling to the transport system. This Cereibacter sphaeroides (strain ATCC 17023 / DSM 158 / JCM 6121 / CCUG 31486 / LMG 2827 / NBRC 12203 / NCIMB 8253 / ATH 2.4.1.) (Rhodobacter sphaeroides) protein is sn-glycerol-3-phosphate import ATP-binding protein UgpC.